Here is a 1086-residue protein sequence, read N- to C-terminus: Lon protease homolog, mitochondrial (1086 aa).

The transit peptide at 1–55 (MLRTSCTSSLRRVVGKYVVSPLVASQIRFATSSVRSQPYLLNSELTELPAQFKRY) directs the protein to the mitochondrion. Residues 61–176 (TEKPEGDVPE…EPNEIVTNAG (116 aa)) are disordered. A compositionally biased stretch (low complexity) spans 69–83 (PESGPEPSGESGISE). Residues 85–120 (SNVENDKHDGNDEIKPEAEKNEKDEIEKPEIDKDAI) show a composition bias toward basic and acidic residues. A compositionally biased stretch (low complexity) spans 124 to 163 (DGVSESSVENVSGSSSAAGGASAPPSGNSNNNNNNNNNNN). A Lon N-terminal domain is found at 183–406 (LLAIPMKDRP…KALELLKVEL (224 aa)). Residue 558–565 (GPPGTGKT) participates in ATP binding. Composition is skewed to basic and acidic residues over residues 767–782 (EARE…EAKS) and 815–827 (KVDE…SEEL). Disordered regions lie at residues 767-788 (EARE…ITGS) and 800-835 (KAQS…EEEE). The Lon proteolytic domain occupies 871–1059 (IPPPGVATGL…QDVFDEIFPN (189 aa)). Residues Ser965 and Lys1008 contribute to the active site.

It belongs to the peptidase S16 family. Homohexamer or homoheptamer. Organized in a ring with a central cavity.

The protein localises to the mitochondrion matrix. The catalysed reaction is Hydrolysis of proteins in presence of ATP.. ATP-dependent serine protease that mediates the selective degradation of misfolded, unassembled or oxidatively damaged polypeptides as well as certain short-lived regulatory proteins in the mitochondrial matrix. May also have a chaperone function in the assembly of inner membrane protein complexes. Participates in the regulation of mitochondrial gene expression and in the maintenance of the integrity of the mitochondrial genome. Binds to mitochondrial DNA in a site-specific manner. The chain is Lon protease homolog, mitochondrial from Scheffersomyces stipitis (strain ATCC 58785 / CBS 6054 / NBRC 10063 / NRRL Y-11545) (Yeast).